We begin with the raw amino-acid sequence, 102 residues long: Putative pterin-4-alpha-carbinolamine dehydratase (102 aa).

It belongs to the pterin-4-alpha-carbinolamine dehydratase family.

The enzyme catalyses (4aS,6R)-4a-hydroxy-L-erythro-5,6,7,8-tetrahydrobiopterin = (6R)-L-erythro-6,7-dihydrobiopterin + H2O. The chain is Putative pterin-4-alpha-carbinolamine dehydratase from Burkholderia lata (strain ATCC 17760 / DSM 23089 / LMG 22485 / NCIMB 9086 / R18194 / 383).